Reading from the N-terminus, the 405-residue chain is Tryptophan synthase beta chain (405 aa).

Lys98 carries the post-translational modification N6-(pyridoxal phosphate)lysine.

It belongs to the TrpB family. Tetramer of two alpha and two beta chains. It depends on pyridoxal 5'-phosphate as a cofactor.

It catalyses the reaction (1S,2R)-1-C-(indol-3-yl)glycerol 3-phosphate + L-serine = D-glyceraldehyde 3-phosphate + L-tryptophan + H2O. Its pathway is amino-acid biosynthesis; L-tryptophan biosynthesis; L-tryptophan from chorismate: step 5/5. Its function is as follows. The beta subunit is responsible for the synthesis of L-tryptophan from indole and L-serine. This Xanthomonas axonopodis pv. citri (strain 306) protein is Tryptophan synthase beta chain.